A 119-amino-acid chain; its full sequence is Enhancer of yellow 2 transcription factor (119 aa).

Positions 93–119 (LTENETEGTDNHDDDEDDEDENGTEDN) are disordered. The segment covering 96 to 119 (NETEGTDNHDDDEDDEDENGTEDN) has biased composition (acidic residues).

The protein belongs to the ENY2 family. Component of the nuclear pore complex (NPC)-associated AMEX complex (anchoring and mRNA export complex), composed of at least e(y)2 and xmas-2. Component of the SAGA transcription coactivator-HAT complexes, at least composed of Ada2b, e(y)2, Pcaf/Gcn5, Taf10 and Nipped-A/Trrap. Within the SAGA complex, e(y)2, Sgf11, and not/nonstop form an additional subcomplex of SAGA called the DUB module (deubiquitination module). Component of the THO complex, composed of at least e(y)2, HPR1, THO2, THOC5, THOC6 and THOC7. Interacts with e(y)1. Interacts with su(Hw) (via zinc fingers). Interacts with xmas-2; required for localization to the nuclear periphery. Interacts with the nuclear pore complex (NPC).

Its subcellular location is the nucleus. The protein localises to the nucleoplasm. It is found in the cytoplasm. Functionally, involved in mRNA export coupled transcription activation by association with both the AMEX and the SAGA complexes. The SAGA complex is a multiprotein complex that activates transcription by remodeling chromatin and mediating histone acetylation and deubiquitination. Within the SAGA complex, participates in a subcomplex that specifically deubiquitinates histone H2B. The SAGA complex is recruited to specific gene promoters by activators, where it is required for transcription. Required for nuclear receptor-mediated transactivation. Involved in transcription elongation by recruiting the THO complex onto nascent mRNA. The AMEX complex functions in docking export-competent ribonucleoprotein particles (mRNPs) to the nuclear entrance of the nuclear pore complex (nuclear basket). AMEX participates in mRNA export and accurate chromatin positioning in the nucleus by tethering genes to the nuclear periphery. The chain is Enhancer of yellow 2 transcription factor from Drosophila willistoni (Fruit fly).